Reading from the N-terminus, the 92-residue chain is Small ribosomal subunit protein uS19c (92 aa).

The protein belongs to the universal ribosomal protein uS19 family.

The protein resides in the plastid. It localises to the chloroplast. In terms of biological role, protein S19 forms a complex with S13 that binds strongly to the 16S ribosomal RNA. The chain is Small ribosomal subunit protein uS19c from Gossypium barbadense (Sea Island cotton).